The primary structure comprises 574 residues: Proline--tRNA ligase (574 aa).

The protein belongs to the class-II aminoacyl-tRNA synthetase family. ProS type 1 subfamily. Homodimer.

It is found in the cytoplasm. It catalyses the reaction tRNA(Pro) + L-proline + ATP = L-prolyl-tRNA(Pro) + AMP + diphosphate. Its function is as follows. Catalyzes the attachment of proline to tRNA(Pro) in a two-step reaction: proline is first activated by ATP to form Pro-AMP and then transferred to the acceptor end of tRNA(Pro). As ProRS can inadvertently accommodate and process non-cognate amino acids such as alanine and cysteine, to avoid such errors it has two additional distinct editing activities against alanine. One activity is designated as 'pretransfer' editing and involves the tRNA(Pro)-independent hydrolysis of activated Ala-AMP. The other activity is designated 'posttransfer' editing and involves deacylation of mischarged Ala-tRNA(Pro). The misacylated Cys-tRNA(Pro) is not edited by ProRS. The sequence is that of Proline--tRNA ligase from Aeromonas hydrophila subsp. hydrophila (strain ATCC 7966 / DSM 30187 / BCRC 13018 / CCUG 14551 / JCM 1027 / KCTC 2358 / NCIMB 9240 / NCTC 8049).